A 306-amino-acid chain; its full sequence is Ornithine carbamoyltransferase (306 aa).

Carbamoyl phosphate-binding positions include 53 to 56 (STRT), Gln80, Arg104, and 131 to 134 (HPCQ). Residues Asn162, Asp219, and 223–224 (SM) contribute to the L-ornithine site. Carbamoyl phosphate contacts are provided by residues 259 to 260 (CL) and Arg287.

It belongs to the aspartate/ornithine carbamoyltransferase superfamily. OTCase family.

Its subcellular location is the cytoplasm. It carries out the reaction carbamoyl phosphate + L-ornithine = L-citrulline + phosphate + H(+). Its pathway is amino-acid biosynthesis; L-arginine biosynthesis; L-arginine from L-ornithine and carbamoyl phosphate: step 1/3. Functionally, reversibly catalyzes the transfer of the carbamoyl group from carbamoyl phosphate (CP) to the N(epsilon) atom of ornithine (ORN) to produce L-citrulline. The polypeptide is Ornithine carbamoyltransferase (Psychrobacter sp. (strain PRwf-1)).